The following is a 418-amino-acid chain: NADH-quinone oxidoreductase subunit D (418 aa).

The protein belongs to the complex I 49 kDa subunit family. As to quaternary structure, NDH-1 is composed of 14 different subunits. Subunits NuoB, C, D, E, F, and G constitute the peripheral sector of the complex.

Its subcellular location is the cell inner membrane. The enzyme catalyses a quinone + NADH + 5 H(+)(in) = a quinol + NAD(+) + 4 H(+)(out). Functionally, NDH-1 shuttles electrons from NADH, via FMN and iron-sulfur (Fe-S) centers, to quinones in the respiratory chain. The immediate electron acceptor for the enzyme in this species is believed to be ubiquinone. Couples the redox reaction to proton translocation (for every two electrons transferred, four hydrogen ions are translocated across the cytoplasmic membrane), and thus conserves the redox energy in a proton gradient. The sequence is that of NADH-quinone oxidoreductase subunit D from Bordetella bronchiseptica (strain ATCC BAA-588 / NCTC 13252 / RB50) (Alcaligenes bronchisepticus).